The following is a 549-amino-acid chain: Glucose-6-phosphate isomerase (549 aa).

The active-site Proton donor is the glutamate 355. Catalysis depends on residues histidine 387 and lysine 515.

It belongs to the GPI family.

The protein localises to the cytoplasm. It catalyses the reaction alpha-D-glucose 6-phosphate = beta-D-fructose 6-phosphate. It participates in carbohydrate biosynthesis; gluconeogenesis. It functions in the pathway carbohydrate degradation; glycolysis; D-glyceraldehyde 3-phosphate and glycerone phosphate from D-glucose: step 2/4. In terms of biological role, catalyzes the reversible isomerization of glucose-6-phosphate to fructose-6-phosphate. The polypeptide is Glucose-6-phosphate isomerase (Haemophilus influenzae (strain PittGG)).